The chain runs to 341 residues: S-adenosylmethionine:tRNA ribosyltransferase-isomerase (341 aa).

The protein belongs to the QueA family. Monomer.

The protein resides in the cytoplasm. The enzyme catalyses 7-aminomethyl-7-carbaguanosine(34) in tRNA + S-adenosyl-L-methionine = epoxyqueuosine(34) in tRNA + adenine + L-methionine + 2 H(+). Its pathway is tRNA modification; tRNA-queuosine biosynthesis. Transfers and isomerizes the ribose moiety from AdoMet to the 7-aminomethyl group of 7-deazaguanine (preQ1-tRNA) to give epoxyqueuosine (oQ-tRNA). The protein is S-adenosylmethionine:tRNA ribosyltransferase-isomerase of Desulfitobacterium hafniense (strain DSM 10664 / DCB-2).